A 152-amino-acid polypeptide reads, in one-letter code: MEDEEVAESWEEAADSGEIDRRLEKKLKITQKESRKSKSPPKVPIVIQDDSLPTGPPPQIRILKRPTSNGVVSSPNSTSRPALPVKSLAQREAEYAEARRRILGSASPEEEQEKPILDRPTRISQPEDSRQPSNVIRQPLGPDGSQGFKQRR.

N-acetylmethionine is present on Met-1. The disordered stretch occupies residues 30-152 (TQKESRKSKS…DGSQGFKQRR (123 aa)). Phosphoserine is present on residues Ser-37, Ser-39, and Ser-51. The SUZ domain maps to 42 to 107 (KVPIVIQDDS…ARRRILGSAS (66 aa)). Polar residues predominate over residues 66 to 80 (PTSNGVVSSPNSTSR). The segment covering 89 to 100 (AQREAEYAEARR) has biased composition (basic and acidic residues). A phosphoserine mark is found at Ser-105 and Ser-107. The SUZ-C domain maps to 111-152 (EQEKPILDRPTRISQPEDSRQPSNVIRQPLGPDGSQGFKQRR). Over residues 113–130 (EKPILDRPTRISQPEDSR) the composition is skewed to basic and acidic residues.

This sequence belongs to the SZRD1 family.

This chain is SUZ RNA-binding domain-containing (Szrd1), found in Mus musculus (Mouse).